Reading from the N-terminus, the 475-residue chain is Tryptophan synthase beta chain 2, chloroplastic (475 aa).

The segment covering 1–21 (MATASTAATFRPSSVSASSEL) has biased composition (polar residues). The interval 1–44 (MATASTAATFRPSSVSASSELTHLRSPSKLPKFTPLPSARSRSS) is disordered. Residues 1 to 51 (MATASTAATFRPSSVSASSELTHLRSPSKLPKFTPLPSARSRSSSSFSVSC) constitute a chloroplast transit peptide. At Thr-52 the chain carries N-acetylthreonine. Lys-170 carries the N6-(pyridoxal phosphate)lysine modification.

Belongs to the TrpB family. Tetramer of two alpha and two beta chains. It depends on pyridoxal 5'-phosphate as a cofactor.

The protein resides in the plastid. It localises to the chloroplast. The catalysed reaction is (1S,2R)-1-C-(indol-3-yl)glycerol 3-phosphate + L-serine = D-glyceraldehyde 3-phosphate + L-tryptophan + H2O. Its pathway is amino-acid biosynthesis; L-tryptophan biosynthesis; L-tryptophan from chorismate: step 5/5. In terms of biological role, the beta subunit is responsible for the synthesis of L-tryptophan from indole and L-serine. This is Tryptophan synthase beta chain 2, chloroplastic (TSB2) from Arabidopsis thaliana (Mouse-ear cress).